Reading from the N-terminus, the 197-residue chain is UPF0301 protein AnaeK_4073 (197 aa).

It belongs to the UPF0301 (AlgH) family.

This is UPF0301 protein AnaeK_4073 from Anaeromyxobacter sp. (strain K).